The primary structure comprises 374 residues: S-adenosylmethionine:tRNA ribosyltransferase-isomerase (374 aa).

This sequence belongs to the QueA family. Monomer.

Its subcellular location is the cytoplasm. The enzyme catalyses 7-aminomethyl-7-carbaguanosine(34) in tRNA + S-adenosyl-L-methionine = epoxyqueuosine(34) in tRNA + adenine + L-methionine + 2 H(+). Its pathway is tRNA modification; tRNA-queuosine biosynthesis. Transfers and isomerizes the ribose moiety from AdoMet to the 7-aminomethyl group of 7-deazaguanine (preQ1-tRNA) to give epoxyqueuosine (oQ-tRNA). The chain is S-adenosylmethionine:tRNA ribosyltransferase-isomerase from Prochlorococcus marinus (strain MIT 9301).